Here is a 318-residue protein sequence, read N- to C-terminus: Aspartate carbamoyltransferase catalytic subunit (318 aa).

Residues Arg67 and Thr68 each coordinate carbamoyl phosphate. Lys95 is an L-aspartate binding site. Arg117, His145, and Gln148 together coordinate carbamoyl phosphate. L-aspartate is bound by residues Arg178 and Arg236. Residues Gly277 and Pro278 each contribute to the carbamoyl phosphate site.

Belongs to the aspartate/ornithine carbamoyltransferase superfamily. ATCase family. As to quaternary structure, heterododecamer (2C3:3R2) of six catalytic PyrB chains organized as two trimers (C3), and six regulatory PyrI chains organized as three dimers (R2).

The catalysed reaction is carbamoyl phosphate + L-aspartate = N-carbamoyl-L-aspartate + phosphate + H(+). It participates in pyrimidine metabolism; UMP biosynthesis via de novo pathway; (S)-dihydroorotate from bicarbonate: step 2/3. Its function is as follows. Catalyzes the condensation of carbamoyl phosphate and aspartate to form carbamoyl aspartate and inorganic phosphate, the committed step in the de novo pyrimidine nucleotide biosynthesis pathway. This is Aspartate carbamoyltransferase catalytic subunit from Roseiflexus sp. (strain RS-1).